Here is a 242-residue protein sequence, read N- to C-terminus: Demethylmenaquinone methyltransferase (242 aa).

S-adenosyl-L-methionine-binding positions include Thr62, Asp83, and 112-113; that span reads DV.

Belongs to the class I-like SAM-binding methyltransferase superfamily. MenG/UbiE family.

The catalysed reaction is a 2-demethylmenaquinol + S-adenosyl-L-methionine = a menaquinol + S-adenosyl-L-homocysteine + H(+). It participates in quinol/quinone metabolism; menaquinone biosynthesis; menaquinol from 1,4-dihydroxy-2-naphthoate: step 2/2. Functionally, methyltransferase required for the conversion of demethylmenaquinol (DMKH2) to menaquinol (MKH2). The sequence is that of Demethylmenaquinone methyltransferase from Protochlamydia amoebophila (strain UWE25).